Here is a 520-residue protein sequence, read N- to C-terminus: NAD(P)H-quinone oxidoreductase subunit 2 (520 aa).

Transmembrane regions (helical) follow at residues 26 to 46, 54 to 74, 91 to 111, 120 to 140, 144 to 164, 179 to 199, 220 to 240, 252 to 272, 288 to 308, 314 to 334, 342 to 362, 386 to 406, 421 to 441, and 474 to 494; these read AVLP…VDLA, WSPP…AMQW, LAIA…LISW, PIGE…LLCG, LVSV…LSGY, LLVG…LYGI, SALA…AVPF, PTPV…ALAI, LLFT…ALAQ, MLAY…VCGT, VLYM…IILF, LGLS…GFFG, LLVT…ISVI, and VALI…NPLF.

The protein belongs to the complex I subunit 2 family. In terms of assembly, NDH-1 can be composed of about 15 different subunits; different subcomplexes with different compositions have been identified which probably have different functions.

It is found in the cellular thylakoid membrane. The enzyme catalyses a plastoquinone + NADH + (n+1) H(+)(in) = a plastoquinol + NAD(+) + n H(+)(out). It carries out the reaction a plastoquinone + NADPH + (n+1) H(+)(in) = a plastoquinol + NADP(+) + n H(+)(out). In terms of biological role, NDH-1 shuttles electrons from an unknown electron donor, via FMN and iron-sulfur (Fe-S) centers, to quinones in the respiratory and/or the photosynthetic chain. The immediate electron acceptor for the enzyme in this species is believed to be plastoquinone. Couples the redox reaction to proton translocation, and thus conserves the redox energy in a proton gradient. Cyanobacterial NDH-1 also plays a role in inorganic carbon-concentration. The chain is NAD(P)H-quinone oxidoreductase subunit 2 from Prochlorococcus marinus (strain NATL2A).